The chain runs to 179 residues: Large ribosomal subunit protein uL6 (179 aa).

This sequence belongs to the universal ribosomal protein uL6 family. Part of the 50S ribosomal subunit.

This protein binds to the 23S rRNA, and is important in its secondary structure. It is located near the subunit interface in the base of the L7/L12 stalk, and near the tRNA binding site of the peptidyltransferase center. The chain is Large ribosomal subunit protein uL6 from Chlorobium phaeobacteroides (strain DSM 266 / SMG 266 / 2430).